Here is an 86-residue protein sequence, read N- to C-terminus: Large ribosomal subunit protein bL27c (86 aa).

Positions 1–27 (MAHKKGSGSTRNGRDSNSKRLGVKKYG) are disordered.

This sequence belongs to the bacterial ribosomal protein bL27 family.

It localises to the plastid. It is found in the chloroplast. In Pyropia yezoensis (Susabi-nori), this protein is Large ribosomal subunit protein bL27c.